We begin with the raw amino-acid sequence, 217 residues long: Adenylate kinase (217 aa).

Glycine 10 to threonine 15 contributes to the ATP binding site. The segment at serine 30–valine 59 is NMP. Residues threonine 31, arginine 36, glutamate 57 to valine 59, glycine 85 to arginine 88, and glutamine 92 each bind AMP. Residues glycine 126–aspartate 164 form an LID region. Residue arginine 127 coordinates ATP. Zn(2+)-binding residues include cysteine 130 and cysteine 133. Residue isoleucine 136–tyrosine 137 participates in ATP binding. Positions 150 and 153 each coordinate Zn(2+). AMP contacts are provided by arginine 161 and arginine 172. Aspartate 200 is an ATP binding site.

The protein belongs to the adenylate kinase family. In terms of assembly, monomer.

It is found in the cytoplasm. The catalysed reaction is AMP + ATP = 2 ADP. Its pathway is purine metabolism; AMP biosynthesis via salvage pathway; AMP from ADP: step 1/1. Its function is as follows. Catalyzes the reversible transfer of the terminal phosphate group between ATP and AMP. Plays an important role in cellular energy homeostasis and in adenine nucleotide metabolism. The polypeptide is Adenylate kinase (Nitrosococcus oceani (strain ATCC 19707 / BCRC 17464 / JCM 30415 / NCIMB 11848 / C-107)).